The chain runs to 344 residues: Dihydroorotase (344 aa).

Residues histidine 13 and histidine 15 each contribute to the Zn(2+) site. Residues 15–17 (HFR) and asparagine 41 each bind substrate. Zn(2+) is bound by residues lysine 98, histidine 135, and histidine 173. N6-carboxylysine is present on lysine 98. Histidine 135 lines the substrate pocket. Leucine 218 is a substrate binding site. Aspartate 246 contacts Zn(2+). Aspartate 246 is a catalytic residue. Residues histidine 250 and alanine 262 each contribute to the substrate site.

The protein belongs to the metallo-dependent hydrolases superfamily. DHOase family. Class II DHOase subfamily. As to quaternary structure, homodimer. Zn(2+) serves as cofactor.

It carries out the reaction (S)-dihydroorotate + H2O = N-carbamoyl-L-aspartate + H(+). The protein operates within pyrimidine metabolism; UMP biosynthesis via de novo pathway; (S)-dihydroorotate from bicarbonate: step 3/3. Functionally, catalyzes the reversible cyclization of carbamoyl aspartate to dihydroorotate. This chain is Dihydroorotase, found in Pseudoalteromonas atlantica (strain T6c / ATCC BAA-1087).